The primary structure comprises 305 residues: Homoserine kinase (305 aa).

ATP is bound at residue 95-105 (PHGRGLGSSSA).

This sequence belongs to the GHMP kinase family. Homoserine kinase subfamily.

The protein localises to the cytoplasm. The catalysed reaction is L-homoserine + ATP = O-phospho-L-homoserine + ADP + H(+). It functions in the pathway amino-acid biosynthesis; L-threonine biosynthesis; L-threonine from L-aspartate: step 4/5. Functionally, catalyzes the ATP-dependent phosphorylation of L-homoserine to L-homoserine phosphate. This chain is Homoserine kinase, found in Streptomyces avermitilis (strain ATCC 31267 / DSM 46492 / JCM 5070 / NBRC 14893 / NCIMB 12804 / NRRL 8165 / MA-4680).